The following is a 397-amino-acid chain: Teichoic acid D-alanine hydrolase (397 aa).

Residues 1–23 (MKFNKVKLVIHACVLLFIIISIA) form the signal peptide.

The protein localises to the cell membrane. The catalysed reaction is [(4-D-Ala)-(2-GlcNAc)-Rib-ol-P]n-[Gro-P]m-beta-D-ManNAc-(1-&gt;4)-alpha-D-GlcNAc-P-peptidoglycan + n H2O = [(2-GlcNAc)-Rib-ol-P]n-[Gro-P]m-beta-D-ManNAc-(1-&gt;4)-alpha-D-GlcNAc-P-peptidoglycan + n D-alanine.. Catalyzes the liberation of D-alanyl moieties present on wall teichoic acid (WTA) and lipoteichoic acid (LTA). Affects the methicillin resistance level and autolysis in the presence of Triton X-100 as well as the cell wall structure. This chain is Teichoic acid D-alanine hydrolase (fmtA), found in Staphylococcus aureus (strain Mu50 / ATCC 700699).